Reading from the N-terminus, the 185-residue chain is Orotate phosphoribosyltransferase (185 aa).

5-phospho-alpha-D-ribose 1-diphosphate-binding positions include arginine 99, lysine 100, lysine 103, and 125–133; that span reads EDVTTTGGS. Threonine 129 and arginine 157 together coordinate orotate.

The protein belongs to the purine/pyrimidine phosphoribosyltransferase family. PyrE subfamily. Homodimer. The cofactor is Mg(2+).

The catalysed reaction is orotidine 5'-phosphate + diphosphate = orotate + 5-phospho-alpha-D-ribose 1-diphosphate. The protein operates within pyrimidine metabolism; UMP biosynthesis via de novo pathway; UMP from orotate: step 1/2. In terms of biological role, catalyzes the transfer of a ribosyl phosphate group from 5-phosphoribose 1-diphosphate to orotate, leading to the formation of orotidine monophosphate (OMP). The sequence is that of Orotate phosphoribosyltransferase from Methanococcus maripaludis (strain DSM 14266 / JCM 13030 / NBRC 101832 / S2 / LL).